The primary structure comprises 93 residues: Large ribosomal subunit protein uL23cz/uL23cy (93 aa).

The protein belongs to the universal ribosomal protein uL23 family. Part of the 50S ribosomal subunit.

It is found in the plastid. The protein localises to the chloroplast. Binds to 23S rRNA. In Jasminum nudiflorum (Winter jasmine), this protein is Large ribosomal subunit protein uL23cz/uL23cy (rpl23-A).